A 353-amino-acid polypeptide reads, in one-letter code: UPF0283 membrane protein YcjF (353 aa).

The next 3 membrane-spanning stretches (helical) occupy residues 70–90 (MVMGGLALFGASVVGQGVQWT), 100–120 (VALGGCAAGALIVGAGVGSVV), and 213–233 (ESTLMIAVSPLALVDMAFIAW).

This sequence belongs to the UPF0283 family.

It is found in the cell inner membrane. The chain is UPF0283 membrane protein YcjF from Salmonella schwarzengrund (strain CVM19633).